A 156-amino-acid polypeptide reads, in one-letter code: Acyl carrier protein, mitochondrial (156 aa).

The transit peptide at 1 to 68 (MASRVLCACV…GTVTHLCRQY (68 aa)) directs the protein to the mitochondrion. In terms of domain architecture, Carrier spans 77–152 (DGIKDRVLYV…EIVDYIADKK (76 aa)). Lysine 88 is subject to N6-acetyllysine. Serine 112 carries the post-translational modification O-(pantetheine 4'-phosphoryl)serine.

This sequence belongs to the acyl carrier protein (ACP) family. Mammalian complex I is composed of 45 different subunits. Interacts with ETFRF1. Identified in a complex composed of MALSU1, MIEF1 upstream open reading frame protein and NDUFAB1; within the trimeric complex, MIEF1 upstream open reading frame protein functions as a bridging scaffold that interacts with MALSU1 on one side, and with NDUFAB1 on the other side. The complex interacts with the mitochondrial large ribosomal subunit. Interacts with alpha-1-microglobulin chain; this interaction is required for the maintenance of mitochondrial redox homeostasis. Component of the mitochondrial core iron-sulfur cluster (ISC) complex composed of NFS1, LYRM4, NDUFAB1, ISCU, FXN, and FDX2; this complex is a heterohexamer containing two copies of each monomer. Component of the cyteine desulfurase complex composed of NFS1, LYRM4 and NDUFAB1; this complex contributes to the stability and cysteine desulfurase activity of NFS1. In terms of processing, phosphopantetheinylation at Ser-112 is essential for interactions with LYR motif-containing proteins.

It is found in the mitochondrion. Its function is as follows. Carrier of the growing fatty acid chain in fatty acid biosynthesis. Accessory and non-catalytic subunit of the mitochondrial membrane respiratory chain NADH dehydrogenase (Complex I), which functions in the transfer of electrons from NADH to the respiratory chain. Accessory protein, of the core iron-sulfur cluster (ISC) assembly complex, that regulates, in association with LYRM4, the stability and the cysteine desulfurase activity of NFS1 and participates in the [2Fe-2S] clusters assembly on the scaffolding protein ISCU. The core iron-sulfur cluster (ISC) assembly complex is involved in the de novo synthesis of a [2Fe-2S] cluster, the first step of the mitochondrial iron-sulfur protein biogenesis. This process is initiated by the cysteine desulfurase complex (NFS1:LYRM4:NDUFAB1) that produces persulfide which is delivered on the scaffold protein ISCU in a FXN-dependent manner. Then this complex is stabilized by FDX2 which provides reducing equivalents to accomplish the [2Fe-2S] cluster assembly. Finally, the [2Fe-2S] cluster is transferred from ISCU to chaperone proteins, including HSCB, HSPA9 and GLRX5. This is Acyl carrier protein, mitochondrial from Mus musculus (Mouse).